A 377-amino-acid chain; its full sequence is Beta sliding clamp (377 aa).

It belongs to the beta sliding clamp family. As to quaternary structure, forms a ring-shaped head-to-tail homodimer around DNA which binds and tethers DNA polymerases and other proteins to the DNA. The DNA replisome complex has a single clamp-loading complex (3 tau and 1 each of delta, delta', psi and chi subunits) which binds 3 Pol III cores (1 core on the leading strand and 2 on the lagging strand) each with a beta sliding clamp dimer. Additional proteins in the replisome are other copies of gamma, psi and chi, Ssb, DNA helicase and RNA primase.

It localises to the cytoplasm. Its function is as follows. Confers DNA tethering and processivity to DNA polymerases and other proteins. Acts as a clamp, forming a ring around DNA (a reaction catalyzed by the clamp-loading complex) which diffuses in an ATP-independent manner freely and bidirectionally along dsDNA. Initially characterized for its ability to contact the catalytic subunit of DNA polymerase III (Pol III), a complex, multichain enzyme responsible for most of the replicative synthesis in bacteria; Pol III exhibits 3'-5' exonuclease proofreading activity. The beta chain is required for initiation of replication as well as for processivity of DNA replication. This is Beta sliding clamp (dnaN) from Staphylococcus aureus (strain COL).